The following is a 286-amino-acid chain: MTIKRNLVKTLQSIRYQATTATAHAESTLNPLPNAAIPPKYALVTVRSFPSLEPLTFVPVPTSTVAAPLRRDILWRAVVYENDNRRVGASNPPGRSENGFSRRKLMPQKGSGRARVGDANSPTRHNGGRALARTAPNDYTTELPSKVYSMAFNNALSHQYKSGKLFVIGGEKVDLISPTPELDLNRLDLVNTNTVEGKEIFEGEVIFRKFLEEFQLKGKRLLFITDKTREGLIKSSDPYKQKVDVIQKELVEVNDILRAQAVFIELEALEYLAMAHQKEILHSVSN.

The N-terminal 26 residues, 1 to 26, are a transit peptide targeting the mitochondrion; that stretch reads MTIKRNLVKTLQSIRYQATTATAHAE. A disordered region spans residues 85–132; sequence RRVGASNPPGRSENGFSRRKLMPQKGSGRARVGDANSPTRHNGGRALA.

The protein belongs to the universal ribosomal protein uL4 family. Component of the mitochondrial large ribosomal subunit (mt-LSU). Mature yeast 74S mitochondrial ribosomes consist of a small (37S) and a large (54S) subunit. The 37S small subunit contains a 15S ribosomal RNA (15S mt-rRNA) and 34 different proteins. The 54S large subunit contains a 21S rRNA (21S mt-rRNA) and 46 different proteins.

The protein localises to the mitochondrion. Its function is as follows. Component of the mitochondrial ribosome (mitoribosome), a dedicated translation machinery responsible for the synthesis of mitochondrial genome-encoded proteins, including at least some of the essential transmembrane subunits of the mitochondrial respiratory chain. The mitoribosomes are attached to the mitochondrial inner membrane and translation products are cotranslationally integrated into the membrane. This chain is Large ribosomal subunit protein uL4m (YML6), found in Saccharomyces cerevisiae (strain ATCC 204508 / S288c) (Baker's yeast).